The following is an 835-amino-acid chain: Ribosome-releasing factor 2, mitochondrial (835 aa).

The transit peptide at 1 to 50 (MPWCNTRLRTCGASPKIFLRRVRCPVLLHNWTIGRVSSVSKMILRFLRSY) directs the protein to the mitochondrion. Positions 57–343 (TRVRNIGIIA…AVVDYLPSPA (287 aa)) constitute a tr-type G domain. GTP is bound by residues 66-73 (AHIDAGKT), 131-135 (DTPGH), and 183-186 (NKMD).

It belongs to the TRAFAC class translation factor GTPase superfamily. Classic translation factor GTPase family. EF-G/EF-2 subfamily.

The protein resides in the mitochondrion. Mitochondrial GTPase that mediates the disassembly of ribosomes from messenger RNA at the termination of mitochondrial protein biosynthesis. Not involved in the GTP-dependent ribosomal translocation step during translation elongation. In Eremothecium gossypii (strain ATCC 10895 / CBS 109.51 / FGSC 9923 / NRRL Y-1056) (Yeast), this protein is Ribosome-releasing factor 2, mitochondrial.